The sequence spans 494 residues: Aldehyde dehydrogenase (494 aa).

NAD(+) is bound at residue 223-228; that stretch reads GSTTAG. Catalysis depends on residues E245 and C279.

The protein belongs to the aldehyde dehydrogenase family.

The catalysed reaction is an aldehyde + NAD(+) + H2O = a carboxylate + NADH + 2 H(+). The protein operates within mycotoxin biosynthesis. In terms of biological role, aldehyde dehydrogenase; part of the gene cluster that mediates the biosynthesis of the selective antifungal agent ascochitine, an o-quinone methide that plays a possible protective role against other microbial competitors in nature and is considered to be important for pathogenicity of legume-associated Didymella species. The pathway probably begins with the synthesis of a keto-aldehyde intermediate by the ascochitine non-reducing polyketide synthase pksAC from successive condensations of 4 malonyl-CoA units, presumably with a simple acetyl-CoA starter unit. Release of the keto-aldehyde intermediate is consistent with the presence of the C-terminal reductive release domain. The HR-PKS (orf7) probably makes a diketide starter unit which is passed to the non-reducing polyketide synthase pksAC for further extension, producing ascochital and ascochitine. The aldehyde dehydrogenase (orf1), the 2-oxoglutarate-dependent dioxygenase (orf3) and the dehydrogenase (orf9) are probably involved in subsequent oxidations of methyl groups to the carboxylic acid of the heterocyclic ring. The ascochitine gene cluster also includes a gene encoding a short peptide with a cupin domain (orf2) that is often found in secondary metabolite gene clusters and which function has still to be determined. The polypeptide is Aldehyde dehydrogenase (Didymella fabae (Leaf and pod spot disease fungus)).